The sequence spans 1251 residues: ATP-dependent helicase/nuclease subunit A (1251 aa).

The UvrD-like helicase ATP-binding domain occupies 5–481; the sequence is TKWTDEQWEA…IILSRNFRSR (477 aa). Position 26–33 (26–33) interacts with ATP; the sequence is AAAGAGKT. The 299-residue stretch at 526–824 folds into the UvrD-like helicase C-terminal domain; sequence TVGGEVEFHL…RIMSIHKSKG (299 aa). The disordered stretch occupies residues 544 to 565; sequence NFTFENEGEEGRQADEGEEDEE.

It belongs to the helicase family. AddA subfamily. In terms of assembly, heterodimer of AddA and AddB/RexB. Mg(2+) serves as cofactor.

It catalyses the reaction Couples ATP hydrolysis with the unwinding of duplex DNA by translocating in the 3'-5' direction.. It carries out the reaction ATP + H2O = ADP + phosphate + H(+). The heterodimer acts as both an ATP-dependent DNA helicase and an ATP-dependent, dual-direction single-stranded exonuclease. Recognizes the chi site generating a DNA molecule suitable for the initiation of homologous recombination. The AddA nuclease domain is required for chi fragment generation; this subunit has the helicase and 3' -&gt; 5' nuclease activities. This Acetivibrio thermocellus (strain ATCC 27405 / DSM 1237 / JCM 9322 / NBRC 103400 / NCIMB 10682 / NRRL B-4536 / VPI 7372) (Clostridium thermocellum) protein is ATP-dependent helicase/nuclease subunit A.